Reading from the N-terminus, the 467-residue chain is Histone acetyltransferase type B catalytic subunit (467 aa).

A disordered region spans residues 1 to 24 (MVQKQQASAGPGTEPKKRRRVGFS). Residues 249 to 251 (ILV) and 256 to 262 (QGKGLGS) each bind acetyl-CoA. E283 serves as the catalytic Proton donor/acceptor.

It belongs to the HAT1 family.

The protein resides in the nucleus. Its subcellular location is the cytoplasm. The enzyme catalyses L-lysyl-[protein] + acetyl-CoA = N(6)-acetyl-L-lysyl-[protein] + CoA + H(+). Functionally, acetylates soluble but not nucleosomal H4. Acetylates 'Lys-12' of histone H4. This Arabidopsis thaliana (Mouse-ear cress) protein is Histone acetyltransferase type B catalytic subunit (HAG2).